Here is a 265-residue protein sequence, read N- to C-terminus: GTP cyclohydrolase 1 type 2 homolog (265 aa).

The a divalent metal cation site is built by H65, D103, H225, and E228.

The protein belongs to the GTP cyclohydrolase I type 2/NIF3 family. In terms of assembly, homohexamer.

In Streptococcus pneumoniae serotype 4 (strain ATCC BAA-334 / TIGR4), this protein is GTP cyclohydrolase 1 type 2 homolog.